Here is a 187-residue protein sequence, read N- to C-terminus: Rusticyanin (187 aa).

The first 32 residues, 1–32 (MYTQNTMKKNWYVTVGAAAALAATVGMGTAMA), serve as a signal peptide directing secretion. One can recognise a Plastocyanin-like domain in the interval 85 to 187 (SFEVHDKKNP…TGMFGKIVVK (103 aa)). H117, C170, H175, and M180 together coordinate Cu cation.

Monomer. The cofactor is Cu cation.

It is found in the periplasm. Its function is as follows. Electron carrier from cytochrome c552 to the A-type oxidase. The chain is Rusticyanin (rus) from Acidithiobacillus ferrooxidans (strain ATCC 23270 / DSM 14882 / CIP 104768 / NCIMB 8455) (Ferrobacillus ferrooxidans (strain ATCC 23270)).